A 455-amino-acid polypeptide reads, in one-letter code: Immunoglobulin alpha-2 heavy chain (455 aa).

4 Ig-like domains span residues 1–95, 121–213, 227–322, and 330–432; these read EVQL…VYYC, PKVF…QDVT, PRLS…ANIT, and PEVH…KTID. The segment at 1–115 is variable (V) domain, involved in antigen recognition; that stretch reads EVQLVETGGG…GKGTTVTVSS (115 aa). 2 disulfides stabilise this stretch: cysteine 22-cysteine 95 and cysteine 141-cysteine 200. The segment at 116–455 is constant (C) domain; sequence ASPTSPKVFP…VMAEADGTCY (340 aa). Residues asparagine 162, asparagine 207, and asparagine 246 are each glycosylated (N-linked (GlcNAc...) asparagine). 2 cysteine pairs are disulfide-bonded: cysteine 225–cysteine 282 and cysteine 249–cysteine 306. The N-linked (GlcNAc...) asparagine glycan is linked to asparagine 320. A disulfide bridge links cysteine 352 with cysteine 415. Asparagine 442 is a glycosylation site (N-linked (GlcNAc...) asparagine).

Immunoglobulins are composed of two identical heavy chains and two identical light chains; disulfide-linked. Monomeric or polymeric.

The protein resides in the secreted. The protein localises to the cell membrane. In terms of biological role, immunoglobulins, also known as antibodies, are membrane-bound or secreted glycoproteins produced by B lymphocytes. In the recognition phase of humoral immunity, the membrane-bound immunoglobulins serve as receptors which, upon binding of a specific antigen, trigger the clonal expansion and differentiation of B lymphocytes into immunoglobulins-secreting plasma cells. Secreted immunoglobulins mediate the effector phase of humoral immunity, which results in the elimination of bound antigens. The antigen binding site is formed by the variable domain of one heavy chain, together with that of its associated light chain. Thus, each immunoglobulin has two antigen binding sites with remarkable affinity for a particular antigen. The variable domains are assembled by a process called V-(D)-J rearrangement and can then be subjected to somatic hypermutations which, after exposure to antigen and selection, allow affinity maturation for a particular antigen. Ig alpha is the major immunoglobulin class in body secretions. The protein is Immunoglobulin alpha-2 heavy chain of Homo sapiens (Human).